A 296-amino-acid chain; its full sequence is Probable endonuclease 4 (296 aa).

His68, His109, Glu144, Asp178, His181, His213, Asp226, His228, and Glu258 together coordinate Zn(2+).

It belongs to the AP endonuclease 2 family. Zn(2+) serves as cofactor.

The enzyme catalyses Endonucleolytic cleavage to 5'-phosphooligonucleotide end-products.. Its function is as follows. Endonuclease IV plays a role in DNA repair. It cleaves phosphodiester bonds at apurinic or apyrimidinic (AP) sites, generating a 3'-hydroxyl group and a 5'-terminal sugar phosphate. The sequence is that of Probable endonuclease 4 from Staphylococcus aureus (strain Mu3 / ATCC 700698).